Reading from the N-terminus, the 151-residue chain is Endoribonuclease YbeY (151 aa).

The Zn(2+) site is built by H108, H112, and D118.

This sequence belongs to the endoribonuclease YbeY family. Zn(2+) is required as a cofactor.

The protein localises to the cytoplasm. Single strand-specific metallo-endoribonuclease involved in late-stage 70S ribosome quality control and in maturation of the 3' terminus of the 16S rRNA. The polypeptide is Endoribonuclease YbeY (Porphyromonas gingivalis (strain ATCC 33277 / DSM 20709 / CIP 103683 / JCM 12257 / NCTC 11834 / 2561)).